The chain runs to 366 residues: MSRKPCCVGEGLKKGAWTTEEDKKLISYIHDHGEGGWRDIPQKAGLKRCGKSCRLRWTNYLKPEIKRGEFSSEEEQIIIMLHASRGNKWSVIARHLPRRTDNEIKNYWNTHLKKRLMEQGIDPVTHKPLASSSNPTVDENLNSPNASSSDKQYSRSSSMPFLSRPPPSSCNMVSKVSELSSNDGTPIQGSSLSCKKRFKKSSSTSRLLNKVAAKATSIKDILSASMEGSLSATTISHASFFNGFTEQIRNEEDSSNTSLTNTLAEFDPFSPSSLYPEHEINATSDLNMDQDYDFSQFFEKFGGDNHNEENSMNDLLMSDVSQEVSSTSVDDQDNMVGNFEGWSNYLLDHTNFMYDTDSDSLEKHFI.

2 consecutive HTH myb-type domains span residues 9–61 (GEGL…TNYL) and 62–116 (KPEI…KKRL). DNA-binding regions (H-T-H motif) lie at residues 37–61 (WRDIPQKAGLKRCGKSCRLRWTNYL) and 89–112 (WSVIARHLPRRTDNEIKNYWNTHL). Positions 124–170 (VTHKPLASSSNPTVDENLNSPNASSSDKQYSRSSSMPFLSRPPPSSC) are disordered. A compositionally biased stretch (polar residues) spans 130-146 (ASSSNPTVDENLNSPNA). Residues 147–158 (SSSDKQYSRSSS) are compositionally biased toward low complexity.

In terms of assembly, can form complexes with MYC2, MYC3 or MYC4. As to expression, expressed in generative organs, mature leaves and trichomes.

It localises to the nucleus. Major regulator of short-chained aliphatic glucosinolates (GLSs) biosynthesis. Together with MYB29/HAG3 and MYB76/HAG2, promotes aliphatic glucosinolate biosynthesis but represses indolic glucosinolate biosynthesis. Prevents insect performance (e.g. lepidopteran insect Mamestra brassicae and Spodoptera exigua) by promoting glucosinolates. The chain is Transcription factor MYB28 (MYB28) from Arabidopsis thaliana (Mouse-ear cress).